The sequence spans 354 residues: GTPase Obg (354 aa).

The 159-residue stretch at 1–159 folds into the Obg domain; the sequence is MKFVDEVKIH…RDLVLELKLL (159 aa). The 174-residue stretch at 160–333 folds into the OBG-type G domain; that stretch reads ADVGIVGYPN…LLDAVGRALF (174 aa). Residues 166 to 173, 191 to 195, 212 to 215, 283 to 286, and 314 to 316 contribute to the GTP site; these read GYPNAGKS, FTTLT, DIPG, TKID, and SAV. Mg(2+) contacts are provided by S173 and T193.

Belongs to the TRAFAC class OBG-HflX-like GTPase superfamily. OBG GTPase family. Monomer. Mg(2+) serves as cofactor.

The protein localises to the cytoplasm. Functionally, an essential GTPase which binds GTP, GDP and possibly (p)ppGpp with moderate affinity, with high nucleotide exchange rates and a fairly low GTP hydrolysis rate. Plays a role in control of the cell cycle, stress response, ribosome biogenesis and in those bacteria that undergo differentiation, in morphogenesis control. This Anaeromyxobacter dehalogenans (strain 2CP-1 / ATCC BAA-258) protein is GTPase Obg.